The primary structure comprises 142 residues: Large ribosomal subunit protein bL17 (142 aa).

Belongs to the bacterial ribosomal protein bL17 family. As to quaternary structure, part of the 50S ribosomal subunit. Contacts protein L32.

The polypeptide is Large ribosomal subunit protein bL17 (Wolbachia pipientis wMel).